A 234-amino-acid chain; its full sequence is Purine nucleoside phosphorylase DeoD-type (234 aa).

His5 provides a ligand contact to a purine D-ribonucleoside. Residues Gly21, Arg25, Arg44, and 88–91 (RIGS) contribute to the phosphate site. Residues 180-182 (EME) and 204-205 (SD) each bind a purine D-ribonucleoside. The Proton donor role is filled by Asp205.

This sequence belongs to the PNP/UDP phosphorylase family. In terms of assembly, homohexamer; trimer of homodimers.

The enzyme catalyses a purine D-ribonucleoside + phosphate = a purine nucleobase + alpha-D-ribose 1-phosphate. It catalyses the reaction a purine 2'-deoxy-D-ribonucleoside + phosphate = a purine nucleobase + 2-deoxy-alpha-D-ribose 1-phosphate. Functionally, catalyzes the reversible phosphorolytic breakdown of the N-glycosidic bond in the beta-(deoxy)ribonucleoside molecules, with the formation of the corresponding free purine bases and pentose-1-phosphate. The chain is Purine nucleoside phosphorylase DeoD-type from Colwellia psychrerythraea (strain 34H / ATCC BAA-681) (Vibrio psychroerythus).